Consider the following 485-residue polypeptide: Ribulose bisphosphate carboxylase large chain 2 (485 aa).

Positions 124 and 174 each coordinate substrate. K176 (proton acceptor) is an active-site residue. Residue K178 coordinates substrate. Mg(2+) contacts are provided by K202, D204, and E205. The residue at position 202 (K202) is an N6-carboxylysine. H294 (proton acceptor) is an active-site residue. 3 residues coordinate substrate: R295, H327, and S379.

This sequence belongs to the RuBisCO large chain family. Type I subfamily. Heterohexadecamer of 8 large chains and 8 small chains. It depends on Mg(2+) as a cofactor.

The catalysed reaction is 2 (2R)-3-phosphoglycerate + 2 H(+) = D-ribulose 1,5-bisphosphate + CO2 + H2O. It carries out the reaction D-ribulose 1,5-bisphosphate + O2 = 2-phosphoglycolate + (2R)-3-phosphoglycerate + 2 H(+). Functionally, ruBisCO catalyzes two reactions: the carboxylation of D-ribulose 1,5-bisphosphate, the primary event in carbon dioxide fixation, as well as the oxidative fragmentation of the pentose substrate. Both reactions occur simultaneously and in competition at the same active site. The polypeptide is Ribulose bisphosphate carboxylase large chain 2 (Rhodopseudomonas palustris (strain BisB5)).